Consider the following 226-residue polypeptide: Ribonuclease 3 (226 aa).

One can recognise an RNase III domain in the interval 4 to 127 (LEEFEKKLGY…VMGAIYLEKG (124 aa)). Residue Glu-40 coordinates Mg(2+). Residue Asp-44 is part of the active site. Mg(2+) contacts are provided by Asn-113 and Glu-116. Glu-116 is a catalytic residue. The region spanning 154–223 (DFKTALQEFT…AKEALKILKA (70 aa)) is the DRBM domain.

The protein belongs to the ribonuclease III family. Homodimer. Requires Mg(2+) as cofactor.

It is found in the cytoplasm. It carries out the reaction Endonucleolytic cleavage to 5'-phosphomonoester.. In terms of biological role, digests double-stranded RNA. Involved in the processing of primary rRNA transcript to yield the immediate precursors to the large and small rRNAs (23S and 16S). Processes some mRNAs, and tRNAs when they are encoded in the rRNA operon. Processes pre-crRNA and tracrRNA of type II CRISPR loci if present in the organism. The protein is Ribonuclease 3 of Nitratiruptor sp. (strain SB155-2).